A 328-amino-acid polypeptide reads, in one-letter code: CCAAT/enhancer-binding protein beta (328 aa).

Arg3 is subject to Asymmetric dimethylarginine; by CARM1. Lys39 is modified (N6-methylated lysine). A disordered region spans residues 165–274; sequence DSCKGPRKEE…NIAVRKSRDK (110 aa). Low complexity predominate over residues 200–231; sequence SVPSGSSGNLSTSSSSSPPGTPNPSESSKSAA. Thr220 is subject to Phosphothreonine; by RPS6KA1, CDK2 and MAPK. The span at 248-264 shows a compositional bias: basic and acidic residues; it reads KCVDKHSDEYKLRRERN. Positions 254–317 constitute a bZIP domain; it reads SDEYKLRRER…STLRNLFKQL (64 aa). The basic motif stretch occupies residues 258–278; that stretch reads KLRRERNNIAVRKSRDKAKMR. Residues 280–287 are leucine-zipper; sequence LETQHKVL.

Belongs to the bZIP family. C/EBP subfamily. Binds DNA as a dimer. Interacts (not methylated) with MED23, MED26, SMARCA2, SMARCB1 and SMARCC1. Post-translationally, methylated. Methylation at Arg-3 by CARM1 and at Lys-39 by EHMT2, inhibit transactivation activity. Methylation is probably inhibited by phosphorylation at Thr-220. As to expression, specifically expressed in myelomoncytic cells.

The protein resides in the nucleus. Its function is as follows. Important transcriptional activator regulating the expression of genes involved in immune and inflammatory responses. Binds to regulatory regions of several acute-phase and cytokines genes and probably plays a role in the regulation of acute-phase reaction, inflammation and hemopoiesis. The consensus recognition site is 5'-T[TG]NNGNAA[TG]-3'. Functions in brown adipose tissue (BAT) differentiation. Regulates the transcriptional induction of peroxisome proliferator-activated receptor gamma (PPARG). Binds to the MGF and MIM-1 promoters and activates the transcription of these genes. Functionally, important transcription factor regulating the expression of genes involved in immune and inflammatory responses. Also plays a significant role in adipogenesis, as well as in the gluconeogenic pathway, liver regeneration, and hematopoiesis. The consensus recognition site is 5'-T[TG]NNGNAA[TG]-3'. Its functional capacity is governed by protein interactions and post-translational protein modifications. In Gallus gallus (Chicken), this protein is CCAAT/enhancer-binding protein beta (CEBPB).